The following is a 746-amino-acid chain: Proline--tRNA ligase (746 aa).

Residues 1–223 (MNNNTNGEII…NSNNNNNNNN (223 aa)) form a required for editing of incorrectly charged tRNA region. A compositionally biased stretch (basic and acidic residues) spans 181–201 (TSKARVDKKEDVQEEMAKNEE). The disordered stretch occupies residues 181–226 (TSKARVDKKEDVQEEMAKNEELQNNNNNNKNNSNSNNNNNNNNNHI). Over residues 204–224 (NNNNNNKNNSNSNNNNNNNNN) the composition is skewed to low complexity. Position 390 (R390) interacts with L-proline. ATP is bound by residues 390 to 394 (RWEFK), 401 to 405 (RTREF), and 475 to 477 (QAA). An L-proline-binding site is contributed by H480. 512–514 (TTR) provides a ligand contact to ATP.

This sequence belongs to the class-II aminoacyl-tRNA synthetase family. ProS type 3 subfamily. Homodimer.

It localises to the cytoplasm. It catalyses the reaction tRNA(Pro) + L-proline + ATP = L-prolyl-tRNA(Pro) + AMP + diphosphate. Inhibited by the quinazolinone-based compound febrifugine from the Chinese plant Dichroa febrifuga which is used to treat malaria-associated fever. Also inhibited by febrifugine derivatives such as halofuginone. Functionally, catalyzes the attachment of proline to tRNA(Pro) in a two-step reaction: proline is first activated by ATP to form Pro-AMP and then transferred to the acceptor end of tRNA(Pro). Functions in trans to edit the amino acid moiety from incorrectly charged Ala-tRNA(Pro). Has no activity on correctly charged Pro-tRNA(Pro) or Ala-tRNA(Ala). The protein is Proline--tRNA ligase of Plasmodium falciparum (isolate 3D7).